The following is a 157-amino-acid chain: CAPA peptides (157 aa).

Positions 1-21 (MQPTMRIIVSMALLAYAVASA) are cleaved as a signal peptide. The propeptide occupies 22–28 (YHSNVKL). Val42 carries the valine amide modification. Positions 45 to 66 (ASGNTWQLPLNDLYPEYEPAQV) are excised as a propeptide. Gln69 is modified (pyrrolidone carboxylic acid; partial). Position 76 is a valine amide (Val76). Leu85 and Leu117 each carry leucine amide. Positions 120–157 (AFKNDDDEITIQNESNDHSEPEQTELIHEDRRKRQTLN) are excised as a propeptide. The segment at 131 to 157 (QNESNDHSEPEQTELIHEDRRKRQTLN) is disordered. Positions 134–151 (SNDHSEPEQTELIHEDRR) are enriched in basic and acidic residues.

It belongs to the pyrokinin family. In terms of tissue distribution, CAPA-periviscerokinin 1: Expressed in corpora cardiaca (CC), corpora allata (CA), antennal lobe (AL) and gnathal ganglion (GNG) (at protein level). Expression detected in most animals in CC and CA and in some animals in AL and GNG (at protein level). CAPA-periviscerokinin 2: Expressed in corpora cardiaca (CC), corpora allata (CA), antennal lobe (AL) and gnathal ganglion (GNG) (at protein level). For non-pyroglutamate form, expression in AL detected in all animals, in CC, CA and GNG in most animals (at protein level). For pyroglutamate form, expression in CC and CA detected in most animals, in AL and GNG in some animals (at protein level). CAPA-periviscerokinin 3: Expressed in corpora cardiaca (CC), corpora allata (CA), antennal lobe (AL) and gnathal ganglion (GNG). Expression detected in most animals in CC and CA and in some animals in AL and GNG (at protein level). CAPA-precursor-related peptide 3: Expressed in corpora cardiaca (CC), corpora allata (CA), antennal lobe (AL) and gnathal ganglion (GNG) (at protein level). Expression in CC and CA detected in some animals, expression in Al and GNG detected in few animals (at protein level). CAPA-trypto-pyrokinin: Expressed in corpora cardiaca (CC), corpora allata (CA), antennal lobe (AL) and gnathal ganglion (GNG) (at protein level). Expression in CC, CA and GNG detected in most animals, in AL in some animals (at protein level).

Its subcellular location is the secreted. Its function is as follows. Myoactive. The chain is CAPA peptides from Agrotis ipsilon (Black cutworm moth).